The chain runs to 338 residues: Tetraacyldisaccharide 4'-kinase (338 aa).

53-60 (TVGGSGKT) lines the ATP pocket.

This sequence belongs to the LpxK family.

It carries out the reaction a lipid A disaccharide + ATP = a lipid IVA + ADP + H(+). It participates in glycolipid biosynthesis; lipid IV(A) biosynthesis; lipid IV(A) from (3R)-3-hydroxytetradecanoyl-[acyl-carrier-protein] and UDP-N-acetyl-alpha-D-glucosamine: step 6/6. Its function is as follows. Transfers the gamma-phosphate of ATP to the 4'-position of a tetraacyldisaccharide 1-phosphate intermediate (termed DS-1-P) to form tetraacyldisaccharide 1,4'-bis-phosphate (lipid IVA). The chain is Tetraacyldisaccharide 4'-kinase from Azorhizobium caulinodans (strain ATCC 43989 / DSM 5975 / JCM 20966 / LMG 6465 / NBRC 14845 / NCIMB 13405 / ORS 571).